Here is a 354-residue protein sequence, read N- to C-terminus: MFLRSSASRLLHGQIPCVLTRSVHSVAIVGAPFSRGQKKLGVEYGPAAIREAGLLKRLSRLGCHLKDFGDLSFTNVPQDDPYNNLVVYPRSVGLANQELAEVVSRAVSGGYSCVTMGGDHSLAIGTIIGHARHRPDLCVIWVDAHADINTPLTTVSGNIHGQPLSFLIKELQDKVPQLPGFSWIKPCLSPPNIVYIGLRDVEPPEHFILKNYDIQYFSMREIDRLGIQKVMEQTFDRLIGKRQRPIHLSFDIDAFDPKLAPATGTPVVGGLTYREGVYITEEIHNTGLLSALDLVEVNPHLATSEEEAKATARLAVDVIASSFGQTREGGHIVYDHLPTPSSPHESENEECVRI.

A mitochondrion-targeting transit peptide spans 1-22 (MFLRSSASRLLHGQIPCVLTRS). His120, Asp143, His145, and Asp147 together coordinate Mn(2+). Substrate is bound by residues 145–149 (HADIN), 156–158 (SGN), and Glu202. Residues Asp251 and Asp253 each contribute to the Mn(2+) site. Thr265 and Glu296 together coordinate substrate.

Belongs to the arginase family. Homotrimer. Requires Mn(2+) as cofactor.

It is found in the mitochondrion. The catalysed reaction is L-arginine + H2O = urea + L-ornithine. It functions in the pathway nitrogen metabolism; urea cycle; L-ornithine and urea from L-arginine: step 1/1. Functionally, may play a role in the regulation of extra-urea cycle arginine metabolism and also in down-regulation of nitric oxide synthesis. Extrahepatic arginase functions to regulate L-arginine bioavailability to nitric oxid synthase (NOS). Arginine metabolism is a critical regulator of innate and adaptive immune responses. Seems to be involved in negative regulation of the survival capacity of activated CD4(+) and CD8(+) T cells. May suppress inflammation-related signaling in asthmatic airway epithelium. May contribute to the immune evasion of H.pylori by restricting M1 macrophage activation and polyamine metabolism. May play a role in promoting prenatal immune suppression. Regulates RPS6KB1 signaling, which promotes endothelial cell senescence and inflammation and implicates NOS3/eNOS dysfunction. Can inhibit endothelial autophagy independently of its enzymatic activity implicating mTORC2 signaling. Involved in vascular smooth muscle cell senescence and apoptosis independently of its enzymatic activity. This is Arginase-2, mitochondrial (Arg2) from Mus musculus (Mouse).